The sequence spans 475 residues: Ribulose bisphosphate carboxylase large chain (475 aa).

The propeptide occupies 1 to 2 (MS). The residue at position 3 (proline 3) is an N-acetylproline. Position 14 is an N6,N6,N6-trimethyllysine (lysine 14). Asparagine 123 and threonine 173 together coordinate substrate. Catalysis depends on lysine 175, which acts as the Proton acceptor. Substrate is bound at residue lysine 177. Residues lysine 201, aspartate 203, and glutamate 204 each coordinate Mg(2+). Lysine 201 is modified (N6-carboxylysine). Histidine 294 acts as the Proton acceptor in catalysis. Residues arginine 295, histidine 327, and serine 379 each coordinate substrate.

Belongs to the RuBisCO large chain family. Type I subfamily. As to quaternary structure, heterohexadecamer of 8 large chains and 8 small chains. Requires Mg(2+) as cofactor.

The protein localises to the plastid. The protein resides in the chloroplast. The catalysed reaction is 2 (2R)-3-phosphoglycerate + 2 H(+) = D-ribulose 1,5-bisphosphate + CO2 + H2O. It carries out the reaction D-ribulose 1,5-bisphosphate + O2 = 2-phosphoglycolate + (2R)-3-phosphoglycerate + 2 H(+). RuBisCO catalyzes two reactions: the carboxylation of D-ribulose 1,5-bisphosphate, the primary event in carbon dioxide fixation, as well as the oxidative fragmentation of the pentose substrate in the photorespiration process. Both reactions occur simultaneously and in competition at the same active site. The sequence is that of Ribulose bisphosphate carboxylase large chain from Nymphaea alba (White water-lily).